Here is a 1178-residue protein sequence, read N- to C-terminus: Niemann-Pick type C1-related protein (1178 aa).

Residue Asn-41 is glycosylated (N-linked (GlcNAc...) asparagine). The next 2 membrane-spanning stretches (helical) occupy residues 157–177 and 412–432; these read PWLF…GIFL and VVEW…TSVV. The SSD domain maps to 414–570; that stretch reads EWLRLCAAVL…LTFFLAGLSL (157 aa). N-linked (GlcNAc...) asparagine glycosylation is present at Asn-433. A run of 4 helical transmembrane segments spans residues 448-468, 478-498, 516-536, and 545-565; these read GALA…LCGV, PFLA…AYSL, AGLS…IGAL, and FCII…TFFL. Asn-621 is a glycosylation site (N-linked (GlcNAc...) asparagine). The helical transmembrane segment at 789-809 threads the bilayer; the sequence is ATVLVIFAAVTALAIYGATTL. N-linked (GlcNAc...) asparagine glycans are attached at residues Asn-917 and Asn-943. The next 5 membrane-spanning stretches (helical) occupy residues 986–1006, 1013–1033, 1037–1057, 1080–1100, and 1114–1134; these read FTLT…LLLI, IIVV…MALI, LSMI…DFTI, IVMG…ILAL, and MMFM…PVVL.

This sequence belongs to the patched family.

Its subcellular location is the inner membrane complex. It catalyses the reaction cholesterol(in) = cholesterol(out). Functionally, likely facilitates the efflux of cholesterol and gangliosides from membranes. Plays a role in the regulation of lipid homeostasis. This is Niemann-Pick type C1-related protein from Toxoplasma gondii (strain ATCC 50611 / Me49).